Reading from the N-terminus, the 439-residue chain is Large ribosomal subunit protein mL65 (439 aa).

The protein belongs to the mitochondrion-specific ribosomal protein mL65 family. In terms of assembly, component of the mitochondrial large ribosomal subunit (mt-LSU). Mature mammalian 55S mitochondrial ribosomes consist of a small (28S) and a large (39S) subunit. The 28S small subunit contains a 12S ribosomal RNA (12S mt-rRNA) and 30 different proteins. The 39S large subunit contains a 16S rRNA (16S mt-rRNA), a copy of mitochondrial valine transfer RNA (mt-tRNA(Val)), which plays an integral structural role, and 52 different proteins. mL65 forms a heterodimer with mL37. In terms of tissue distribution, heart, skeletal muscle, kidney and liver. Lower expression in placenta and peripheral blood leukocytes.

The protein localises to the mitochondrion. The chain is Large ribosomal subunit protein mL65 (MRPS30) from Homo sapiens (Human).